We begin with the raw amino-acid sequence, 599 residues long: Elongation factor 4 (599 aa).

The tr-type G domain occupies 5 to 187; sequence SHIRNFSIIA…ALVNGIPAPV (183 aa). GTP-binding positions include 17 to 22 and 134 to 137; these read DHGKST and NKMD.

The protein belongs to the TRAFAC class translation factor GTPase superfamily. Classic translation factor GTPase family. LepA subfamily.

It localises to the cell inner membrane. The catalysed reaction is GTP + H2O = GDP + phosphate + H(+). Its function is as follows. Required for accurate and efficient protein synthesis under certain stress conditions. May act as a fidelity factor of the translation reaction, by catalyzing a one-codon backward translocation of tRNAs on improperly translocated ribosomes. Back-translocation proceeds from a post-translocation (POST) complex to a pre-translocation (PRE) complex, thus giving elongation factor G a second chance to translocate the tRNAs correctly. Binds to ribosomes in a GTP-dependent manner. The chain is Elongation factor 4 from Teredinibacter turnerae (strain ATCC 39867 / T7901).